Here is a 290-residue protein sequence, read N- to C-terminus: MPSLKDLRNRIASVKATQKITKAMQMVAAAKLRRAQEAAEAARPYAERMDAVLANVSASISGADAPPLMAGTGKDDVHLVVVCTADRGLAGSFNSQIARLAREHIRKLQANGRQVKIITVGKKGYDLLRRDFGKLVIDRIELREVKQIGFANADAIAKKVIGLFEAGEFDVCTLIYSRFKSVISQIPTEQQIIPAAVPQAEGESTGAIYEYEPDAGAILADLIPRNIAVQIFRALLENAAGEMGAKMTAMDNATRNAGEMINKLTITYNRQRQAQITKELIEIISGAEAL.

This sequence belongs to the ATPase gamma chain family. F-type ATPases have 2 components, CF(1) - the catalytic core - and CF(0) - the membrane proton channel. CF(1) has five subunits: alpha(3), beta(3), gamma(1), delta(1), epsilon(1). CF(0) has three main subunits: a, b and c.

It localises to the cell inner membrane. Functionally, produces ATP from ADP in the presence of a proton gradient across the membrane. The gamma chain is believed to be important in regulating ATPase activity and the flow of protons through the CF(0) complex. This Chelativorans sp. (strain BNC1) protein is ATP synthase gamma chain.